We begin with the raw amino-acid sequence, 72 residues long: UPF0154 protein YneF (72 aa).

The helical transmembrane segment at 4–24 (WVGILVGVVALLIGVALGFFI) threads the bilayer.

The protein belongs to the UPF0154 family.

It localises to the membrane. The chain is UPF0154 protein YneF (yneF) from Bacillus subtilis (strain 168).